The chain runs to 272 residues: MMIRWKHRGGDIIFLMFTTLAAVSTASEHEHRTHMCSAEGNICSENAATVCRNNTCVSACSLRGMQECECDAEEDNYCYLCCGNSEHQCMAAHHHNILRPNGERWEREACSRCRMHGAELEGLPCDDTDSARLCIGGRCSNSVCHTKSPGSVCDRKMEKLCVDNTCENPCARYAPHLMVCDCPSIDQDTGFASEDRCQLCCYDFNLKPTNRRCQNAYRKYKIMDMFQKPIWRVGLECAGGKVCNKYGVCSSSHISFLVPFFSVILVSLISFI.

2 consecutive transmembrane segments (helical) span residues 9–29 (GGDI…ASEH) and 252–272 (SHIS…ISFI).

It is found in the membrane. This is an uncharacterized protein from Caenorhabditis elegans.